Here is a 54-residue protein sequence, read N- to C-terminus: ATP synthase protein 8 (54 aa).

A helical membrane pass occupies residues 9–25 (WVFLFFLVWLVLGFLGL).

Belongs to the ATPase protein 8 family. As to quaternary structure, F-type ATPases have 2 components, CF(1) - the catalytic core - and CF(0) - the membrane proton channel.

The protein resides in the mitochondrion membrane. Its function is as follows. Mitochondrial membrane ATP synthase (F(1)F(0) ATP synthase or Complex V) produces ATP from ADP in the presence of a proton gradient across the membrane which is generated by electron transport complexes of the respiratory chain. F-type ATPases consist of two structural domains, F(1) - containing the extramembraneous catalytic core and F(0) - containing the membrane proton channel, linked together by a central stalk and a peripheral stalk. During catalysis, ATP synthesis in the catalytic domain of F(1) is coupled via a rotary mechanism of the central stalk subunits to proton translocation. Part of the complex F(0) domain. Minor subunit located with subunit a in the membrane. In Branchiostoma floridae (Florida lancelet), this protein is ATP synthase protein 8 (MTATP8).